Reading from the N-terminus, the 313-residue chain is MTSTPLSNSLPPTQHATWRDYLALTKPKVISLLLWTTVTAMFMAARGWPGDTFWSGLWLLIVVSVAGYMSAGSAGVFNMIIDRDIDLKMTRTAGRPTSSGLISSRNAAIFGTTLQVLSFVMLWVWGTPLAAWMSLAGFVFYVVIYTQWLKRTTWHNIVIGGAAGCFPPLVGWAAVTGDLNLFAGYLFAIIFFWTPVHFWALALMIKEEYREVGIPMLPVVHGDHMTVAQIGLYAIYTVVLSLMPVYFGAVSWIYFVSGALLGAWLLWLSYKLYRHVASGQPAERKVAVPLYLYSMLYLALLFLAGAIDRAVLS.

The next 9 membrane-spanning stretches (helical) occupy residues 29 to 49 (VISL…RGWP), 57 to 77 (LWLL…AGVF), 101 to 123 (LISS…VMLW), 124 to 144 (VWGT…YVVI), 157 to 177 (IVIG…AVTG), 185 to 205 (YLFA…ALMI), 225 to 245 (MTVA…LMPV), 247 to 267 (FGAV…WLLW), and 287 to 307 (AVPL…AGAI).

The protein belongs to the UbiA prenyltransferase family. Protoheme IX farnesyltransferase subfamily.

The protein resides in the cell membrane. The enzyme catalyses heme b + (2E,6E)-farnesyl diphosphate + H2O = Fe(II)-heme o + diphosphate. It functions in the pathway porphyrin-containing compound metabolism; heme O biosynthesis; heme O from protoheme: step 1/1. Its function is as follows. Converts heme B (protoheme IX) to heme O by substitution of the vinyl group on carbon 2 of heme B porphyrin ring with a hydroxyethyl farnesyl side group. The protein is Protoheme IX farnesyltransferase of Deinococcus radiodurans (strain ATCC 13939 / DSM 20539 / JCM 16871 / CCUG 27074 / LMG 4051 / NBRC 15346 / NCIMB 9279 / VKM B-1422 / R1).